A 495-amino-acid chain; its full sequence is Fibronectin type III and SPRY domain-containing protein 1 (495 aa).

Residues 4–99 (QKESLRKIIT…ALESSEELLE (96 aa)) adopt a coiled-coil conformation. The COS domain occupies 105 to 162 (LCSSENDSFTQAAKDIKDSVTMAPAFRLSLKAKASDSMNHMMVDFTHERNLLQSITFL). Residues 164–268 (VPATPEIHVA…EPVTLETHAF (105 aa)) form the Fibronectin type-III domain. Residues 281 to 476 (LKVEDLSVEW…VQTGLQVPSI (196 aa)) enclose the B30.2/SPRY domain. The segment at 306 to 332 (KNRTNSPMHSPARTAMMSPKRAPSARV) is disordered. Residue S490 is modified to Phosphoserine.

In terms of assembly, oligomerization is required for binding to microtubules.

The protein resides in the cytoplasm. The protein localises to the cytoskeleton. Its subcellular location is the microtubule organizing center. It is found in the centrosome. It localises to the nucleus. The protein resides in the cleavage furrow. May be involved in microtubule organization and stabilization. In Danio rerio (Zebrafish), this protein is Fibronectin type III and SPRY domain-containing protein 1 (fsd1).